The primary structure comprises 232 residues: UPF0758 protein Amet_2289 (232 aa).

The 123-residue stretch at 110-232 (RIKSPDDVSN…YYSLKEKSMM (123 aa)) folds into the MPN domain. Zn(2+) is bound by residues histidine 181, histidine 183, and aspartate 194. The JAMM motif signature appears at 181 to 194 (HNHPSGDPSPSGED).

Belongs to the UPF0758 family.

The sequence is that of UPF0758 protein Amet_2289 from Alkaliphilus metalliredigens (strain QYMF).